The chain runs to 380 residues: Probable tRNA sulfurtransferase (380 aa).

A THUMP domain is found at 58–162; that stretch reads EEVIERLKKV…MAFVYAGVIE (105 aa). ATP is bound by residues 178–179, 203–204, arginine 260, glycine 282, and glutamine 291; these read LL and YF.

Belongs to the ThiI family.

It localises to the cytoplasm. The catalysed reaction is [ThiI sulfur-carrier protein]-S-sulfanyl-L-cysteine + a uridine in tRNA + 2 reduced [2Fe-2S]-[ferredoxin] + ATP + H(+) = [ThiI sulfur-carrier protein]-L-cysteine + a 4-thiouridine in tRNA + 2 oxidized [2Fe-2S]-[ferredoxin] + AMP + diphosphate. The enzyme catalyses [ThiS sulfur-carrier protein]-C-terminal Gly-Gly-AMP + S-sulfanyl-L-cysteinyl-[cysteine desulfurase] + AH2 = [ThiS sulfur-carrier protein]-C-terminal-Gly-aminoethanethioate + L-cysteinyl-[cysteine desulfurase] + A + AMP + 2 H(+). It functions in the pathway cofactor biosynthesis; thiamine diphosphate biosynthesis. Its function is as follows. Catalyzes the ATP-dependent transfer of a sulfur to tRNA to produce 4-thiouridine in position 8 of tRNAs, which functions as a near-UV photosensor. Also catalyzes the transfer of sulfur to the sulfur carrier protein ThiS, forming ThiS-thiocarboxylate. This is a step in the synthesis of thiazole, in the thiamine biosynthesis pathway. The sulfur is donated as persulfide by IscS. In Thermoanaerobacter sp. (strain X514), this protein is Probable tRNA sulfurtransferase.